A 281-amino-acid chain; its full sequence is Probable endonuclease 4 (281 aa).

Zn(2+) is bound by residues His70, His110, Glu146, Asp180, His183, His217, Asp230, His232, and Glu262.

The protein belongs to the AP endonuclease 2 family. Zn(2+) serves as cofactor.

It catalyses the reaction Endonucleolytic cleavage to 5'-phosphooligonucleotide end-products.. Its function is as follows. Endonuclease IV plays a role in DNA repair. It cleaves phosphodiester bonds at apurinic or apyrimidinic (AP) sites, generating a 3'-hydroxyl group and a 5'-terminal sugar phosphate. The polypeptide is Probable endonuclease 4 (Nitratiruptor sp. (strain SB155-2)).